The chain runs to 391 residues: NAD(P)H-quinone oxidoreductase subunit H, chloroplastic (391 aa).

It belongs to the complex I 49 kDa subunit family. In terms of assembly, NDH is composed of at least 16 different subunits, 5 of which are encoded in the nucleus.

The protein resides in the plastid. The protein localises to the chloroplast thylakoid membrane. The enzyme catalyses a plastoquinone + NADH + (n+1) H(+)(in) = a plastoquinol + NAD(+) + n H(+)(out). It carries out the reaction a plastoquinone + NADPH + (n+1) H(+)(in) = a plastoquinol + NADP(+) + n H(+)(out). Its function is as follows. NDH shuttles electrons from NAD(P)H:plastoquinone, via FMN and iron-sulfur (Fe-S) centers, to quinones in the photosynthetic chain and possibly in a chloroplast respiratory chain. The immediate electron acceptor for the enzyme in this species is believed to be plastoquinone. Couples the redox reaction to proton translocation, and thus conserves the redox energy in a proton gradient. This Physcomitrium patens (Spreading-leaved earth moss) protein is NAD(P)H-quinone oxidoreductase subunit H, chloroplastic.